The chain runs to 218 residues: Insulin-induced gene 2 protein (218 aa).

At 1-21 the chain is on the cytoplasmic side; the sequence is MGETDNAPRGPPSFLPHKMNL. A helical membrane pass occupies residues 22 to 44; sequence LLRGLLLFLIGVFLALVLNLLQV. The Lumenal segment spans residues 45–63; that stretch reads QRNVTLFPPDVLSSLFSSA. Residues 64–81 traverse the membrane as a helical segment; the sequence is WWVPLCCGTAAAAIGLLY. The Cytoplasmic segment spans residues 82-96; sequence PCIDRHLGEPHKFKR. Residues 97–119 form a helical membrane-spanning segment; it reads EWSSVMRCVAVFVGINHASAKVD. Over 120-122 the chain is Lumenal; that stretch reads FAN. A helical transmembrane segment spans residues 123 to 141; sequence NTQLSLTLAALSIGLWWTF. The Cytoplasmic portion of the chain corresponds to 142–146; sequence DRSRS. Residues 147–168 form a helical membrane-spanning segment; it reads GLGLGIGISFFATVVSQLLVYN. The Lumenal portion of the chain corresponds to 169 to 182; the sequence is GVYEYTAPDFLYVR. Residues 183-200 traverse the membrane as a helical segment; that stretch reads SWLPCIFFAGGITMGNIG. Over 201 to 218 the chain is Cytoplasmic; that stretch reads RQLEMYERLALVEKSHRD. The short motif at 212–218 is the KxHxx element; sequence VEKSHRD.

This sequence belongs to the INSIG family. Interacts with scap; interaction is direct and only takes place in the presence of sterols; it prevents interaction between scap and the coat protein complex II (COPII). Associates with the SCAP-SREBP complex; association is mediated via its interaction with scap and only takes place in the presence of sterols.

It is found in the endoplasmic reticulum membrane. In terms of biological role, oxysterol-binding protein that mediates feedback control of cholesterol synthesis by controlling both endoplasmic reticulum to Golgi transport of scap and degradation of hmgcr. Acts as a negative regulator of cholesterol biosynthesis by mediating the retention of the SCAP-SREBP complex in the endoplasmic reticulum, thereby blocking the processing of sterol regulatory element-binding proteins (SREBPs). Binds oxysterol, including 22-hydroxycholesterol, 24-hydroxycholesterol, 25-hydroxycholesterol and 27-hydroxycholesterol, regulating interaction with scap and retention of the SCAP-SREBP complex in the endoplasmic reticulum. In presence of oxysterol, interacts with scap, retaining the SCAP-SREBP complex in the endoplasmic reticulum, thereby preventing scap from escorting SREBPs to the Golgi. Sterol deprivation reduce oxysterol-binding, disrupting the interaction between insig2 and scap, thereby promoting Golgi transport of the SCAP-SREBP complex, followed by processing and nuclear translocation of SREBPs. Also regulates cholesterol synthesis by regulating degradation of hmgcr. In Xenopus tropicalis (Western clawed frog), this protein is Insulin-induced gene 2 protein.